We begin with the raw amino-acid sequence, 1009 residues long: Glutamate receptor ionotropic, delta-1 (1009 aa).

The N-terminal stretch at 1 to 20 (MEALTLWLLPWICQCVSVRA) is a signal peptide. The segment at 21 to 436 (DSIIHIGAIF…ERPMGSRLQG (416 aa)) is interaction with CBLN1. The Extracellular segment spans residues 21–562 (DSIIHIGAIF…SIFSLFAPFD (542 aa)). 3 disulfide bridges follow: Cys80–Cys351, Cys96–Cys128, and Cys294–Cys306. N-linked (GlcNAc...) asparagine glycans are attached at residues Asn131 and Asn200. N-linked (GlcNAc...) asparagine glycosylation is found at Asn422 and Asn498. 3 residues coordinate Ca(2+): Glu527, Val530, and Asp531. The chain crosses the membrane as a helical span at residues 563 to 583 (FAVWACIAAAIPVVGVLIFVL). Over 584 to 637 (NRIQAVRAQSAAQPRPSASATLHSAIWIVYGAFVQQGGESSVNSMAMRIVMGSW) the chain is Cytoplasmic. The helical transmembrane segment at 638–658 (WLFTLIVCSSYTANLAAFLTV) threads the bilayer. Residues 659–830 (SRMDNPIRTF…ADGKSLKLHS (172 aa)) lie on the Extracellular side of the membrane. Ca(2+)-binding residues include Asp753, Asp755, and Ser757. A helical transmembrane segment spans residues 831-851 (FAGVFCILAIGLLLACLVAAL). Residues 852–1009 (ELWWNSNRCH…ALDTSHGTSI (158 aa)) are Cytoplasmic-facing. Positions 930–942 (FLPEQSSHGTSRT) are enriched in polar residues. Residues 930–954 (FLPEQSSHGTSRTLSSGPSSNLPLP) are disordered. Residues 943–954 (LSSGPSSNLPLP) show a composition bias toward low complexity.

Belongs to the glutamate-gated ion channel (TC 1.A.10.1) family. GRID1 subfamily. As to quaternary structure, homodimer. Interacts (via extracellular N-terminal domain) with CBLN1 (via C1q domain), and more weakly with CBLN2; the interactions mediate the trans-synaptic adhesion complexes also with neurexins and are required for ligand-gated cation channel activity.

It is found in the postsynaptic cell membrane. The catalysed reaction is Ca(2+)(in) = Ca(2+)(out). It carries out the reaction Na(+)(in) = Na(+)(out). Functionally, member of the ionotropic glutamate receptor family, which plays a crucial role in synaptic organization and signal transduction in the central nervous system. Although it shares structural features with ionotropic glutamate receptors, does not bind glutamate as a primary ligand. Instead, forms trans-synaptic adhesion complexes with presynaptic neurexins and cerebellins, regulating NMDA and AMPA receptor activity and influencing synaptic plasticity through signal transduction. In the presence of neurexins and cerebellins, forms cation-selective channels that are proposed to be gated by glycine and D-serine. However, recent research disputes this ligand-gated cation channel activity. Cation-selective ion channel can be triggered by GRM1 in dopaminergic neurons. Also acts as a receptor for GABA, modulating inhibitory synaptic plasticity through non-ionotropic mechanisms. This chain is Glutamate receptor ionotropic, delta-1, found in Homo sapiens (Human).